The primary structure comprises 272 residues: Phosphonates import ATP-binding protein PhnC 1 (272 aa).

The ABC transporter domain occupies 2–246; the sequence is LRIQALTKTY…VLTSIYGEED (245 aa). 35–42 lines the ATP pocket; it reads GPSGAGKS.

It belongs to the ABC transporter superfamily. Phosphonates importer (TC 3.A.1.9.1) family. In terms of assembly, the complex is composed of two ATP-binding proteins (PhnC), two transmembrane proteins (PhnE) and a solute-binding protein (PhnD).

Its subcellular location is the cell inner membrane. It carries out the reaction phosphonate(out) + ATP + H2O = phosphonate(in) + ADP + phosphate + H(+). Its function is as follows. Part of the ABC transporter complex PhnCDE involved in phosphonates import. Responsible for energy coupling to the transport system. In Rhodopseudomonas palustris (strain BisB18), this protein is Phosphonates import ATP-binding protein PhnC 1.